A 329-amino-acid polypeptide reads, in one-letter code: GTP 3',8-cyclase (329 aa).

The region spanning 1-229 is the Radical SAM core domain; that stretch reads MNPVDYLRIS…ESTIKGNGPA (229 aa). GTP is bound at residue arginine 8. [4Fe-4S] cluster-binding residues include cysteine 15 and cysteine 19. Tyrosine 21 is an S-adenosyl-L-methionine binding site. Position 22 (cysteine 22) interacts with [4Fe-4S] cluster. Arginine 60 contributes to the GTP binding site. S-adenosyl-L-methionine is bound at residue glycine 64. Threonine 91 lines the GTP pocket. Residue serine 115 participates in S-adenosyl-L-methionine binding. Residue lysine 155 participates in GTP binding. Methionine 189 contacts S-adenosyl-L-methionine. Cysteine 252 and cysteine 255 together coordinate [4Fe-4S] cluster. 257 to 259 serves as a coordination point for GTP; the sequence is RMR. Residue cysteine 269 coordinates [4Fe-4S] cluster.

This sequence belongs to the radical SAM superfamily. MoaA family. As to quaternary structure, monomer and homodimer. It depends on [4Fe-4S] cluster as a cofactor.

It carries out the reaction GTP + AH2 + S-adenosyl-L-methionine = (8S)-3',8-cyclo-7,8-dihydroguanosine 5'-triphosphate + 5'-deoxyadenosine + L-methionine + A + H(+). It functions in the pathway cofactor biosynthesis; molybdopterin biosynthesis. Functionally, catalyzes the cyclization of GTP to (8S)-3',8-cyclo-7,8-dihydroguanosine 5'-triphosphate. In Rippkaea orientalis (strain PCC 8801 / RF-1) (Cyanothece sp. (strain PCC 8801)), this protein is GTP 3',8-cyclase.